The chain runs to 300 residues: Ecto-ADP-ribosyltransferase 4 (300 aa).

The signal sequence occupies residues 1–23; that stretch reads MALWLPGGQLTLLLLLWVQQTPA. At 24 to 269 the chain is on the extracellular side; the sequence is GSTEAPLKVD…QLLKACSKKC (246 aa). 2 disulfides stabilise this stretch: Cys-48/Cys-259 and Cys-161/Cys-210. One can recognise a TR mART core domain in the interval 70-255; it reads KYYSRAWQKA…INLRSAGNMS (186 aa). N-linked (GlcNAc...) asparagine glycosylation is found at Asn-110 and Asn-157. Gln-185 is a binding site for NAD(+). The N-linked (GlcNAc...) asparagine glycan is linked to Asn-201. Residue Ser-219 participates in NAD(+) binding. Residue Asn-253 is glycosylated (N-linked (GlcNAc...) asparagine). The GPI-anchor amidated alanine moiety is linked to residue Ala-264. A propeptide spans 265 to 300 (removed in mature form); it reads CSKKCAPAPVVIGCLFLVTVVISSKSRAQRNLLAPF. The chain crosses the membrane as a helical span at residues 270-286; that stretch reads APAPVVIGCLFLVTVVI. The Cytoplasmic portion of the chain corresponds to 287 to 300; that stretch reads SSKSRAQRNLLAPF.

Belongs to the Arg-specific ADP-ribosyltransferase family.

The protein resides in the membrane. It is found in the cell membrane. It catalyses the reaction L-arginyl-[protein] + NAD(+) = N(omega)-(ADP-D-ribosyl)-L-arginyl-[protein] + nicotinamide + H(+). The chain is Ecto-ADP-ribosyltransferase 4 (Art4) from Mus musculus (Mouse).